The sequence spans 443 residues: Probable serine transporter (443 aa).

Residues 1–48 (MEIASNKGVIADASTPAGRAGMSESEWREAIKFDSTDTGWVIMSIGMA) are Cytoplasmic-facing. The helical transmembrane segment at 49–69 (IGAGIVFLPVQVGLMGLWVFL) threads the bilayer. At 70–110 (LSSVIGYPAMYLFQRLFINTLAESPECKDYPSVISGYLGKN) the chain is on the periplasmic side. A helical membrane pass occupies residues 111 to 131 (WGILLGALYFVMLVIWMFVYS). Topologically, residues 132–149 (TAITNDSASYLHTFGVTE) are cytoplasmic. A helical membrane pass occupies residues 150–170 (GLLSDSPFYGLVLICILVAIS). At 171-182 (SRGEKLLFKIST) the chain is on the periplasmic side. A helical transmembrane segment spans residues 183-203 (GMVLTKLLVVAALGVSMVGMW). Over 204-214 (HLYNVGSLPPL) the chain is Cytoplasmic. Residues 215-235 (GLLVKNAIITLPFTLTSILFI) form a helical membrane-spanning segment. Residues 236-264 (QTLSPMVISYRSREKSIEVARHKALRAMN) lie on the Periplasmic side of the membrane. A helical transmembrane segment spans residues 265-285 (IAFGILFVTVFFYAVSFTLAM). Residues 286-297 (GHDEAVKAYEQN) are Cytoplasmic-facing. 2 helical membrane passes run 298 to 318 (ISAL…WVKV) and 319 to 339 (VSVI…YLGF). Over 340 to 367 (REATQGIVMNILRRKMPAEKINENLVQR) the chain is Cytoplasmic. Residues 368-388 (GIMIFAILLAWSAIVLNAPVL) form a helical membrane-spanning segment. Position 389 (serine 389) is a topological domain, periplasmic. The helical transmembrane segment at 390 to 410 (FTSICSPIFGMVGCLIPAWLV) threads the bilayer. The Cytoplasmic portion of the chain corresponds to 411 to 421 (YKVPALHKYKG). The helical transmembrane segment at 422–442 (MSLYLIIVTGLLLCVSPFLAF) threads the bilayer. Residue serine 443 is a topological domain, periplasmic.

The protein belongs to the amino acid/polyamine transporter 2 family. SdaC/TdcC subfamily.

Its subcellular location is the cell inner membrane. Plays a role in L-cysteine detoxification. May transport both D- and L-serine. This is Probable serine transporter (dlsT) from Escherichia coli (strain K12).